We begin with the raw amino-acid sequence, 127 residues long: Large ribosomal subunit protein bL12 (127 aa).

Residues 93–127 are disordered; that stretch reads LVDEAPNPVSEGVSREEADDLKAQIEDAGGEVELQ. Over residues 105–117 the composition is skewed to basic and acidic residues; that stretch reads VSREEADDLKAQI.

This sequence belongs to the bacterial ribosomal protein bL12 family. In terms of assembly, homodimer. Part of the ribosomal stalk of the 50S ribosomal subunit. Forms a multimeric L10(L12)X complex, where L10 forms an elongated spine to which 2 to 4 L12 dimers bind in a sequential fashion. Binds GTP-bound translation factors.

Forms part of the ribosomal stalk which helps the ribosome interact with GTP-bound translation factors. Is thus essential for accurate translation. The sequence is that of Large ribosomal subunit protein bL12 from Salinibacter ruber (strain DSM 13855 / M31).